Consider the following 156-residue polypeptide: MQASRSPDDLVKTFKSILKEERFGSQSEIVNALQAEGFSNINQSKVSRMLSKFGAVRTRNAKQEMVYCLPAELGVPTAGSPLKNLVLDVDHNQSMIVVRTSPGAAQLIARLLDSIGKPEGILGTIAGDDTIFICPSSIHSIEDTLETVKSLFNYAD.

Belongs to the ArgR family.

It is found in the cytoplasm. It participates in amino-acid biosynthesis; L-arginine biosynthesis [regulation]. Its function is as follows. Regulates arginine biosynthesis genes. In Shewanella pealeana (strain ATCC 700345 / ANG-SQ1), this protein is Arginine repressor.